Consider the following 522-residue polypeptide: Probable mannosyltransferase KTR5 (522 aa).

Over 1-16 the chain is Cytoplasmic; that stretch reads MLLIRRTINAFLGCIH. The chain crosses the membrane as a helical; Signal-anchor for type II membrane protein span at residues 17-37; the sequence is CNLTATCILIAFVITMYVVLV. Residues 38 to 82 form a stem region region; sequence SEPASVDGTMGNFLPFSKMDLATKRDRPFYSNCVNTQDYLLNPSY. At 38-522 the chain is on the lumenal side; the sequence is SEPASVDGTM…REDYLRQFGN (485 aa). The catalytic stretch occupies residues 83-522; the sequence is IKQNASFVML…REDYLRQFGN (440 aa). N-linked (GlcNAc...) asparagine glycosylation is present at Asn-86. Glu-363 (nucleophile) is an active-site residue.

This sequence belongs to the glycosyltransferase 15 family.

It localises to the membrane. Functionally, possible glycosyltransferase that transfers an alpha-D-mannosyl residue from GDP-mannose into lipid-linked oligosaccharide, forming an alpha-(1-&gt;2)-D-mannosyl-D-mannose linkage. In Saccharomyces cerevisiae (strain ATCC 204508 / S288c) (Baker's yeast), this protein is Probable mannosyltransferase KTR5 (KTR5).